We begin with the raw amino-acid sequence, 246 residues long: Small ribosomal subunit protein uS2 (246 aa).

It belongs to the universal ribosomal protein uS2 family.

This Burkholderia vietnamiensis (strain G4 / LMG 22486) (Burkholderia cepacia (strain R1808)) protein is Small ribosomal subunit protein uS2.